The following is a 683-amino-acid chain: Cysteine-rich receptor-like protein kinase 28 (683 aa).

A signal peptide spans M1–A24. The Extracellular segment spans residues Q25 to K288. Gnk2-homologous domains lie at P32–I136 and T142–F251. N43, N47, N73, and N153 each carry an N-linked (GlcNAc...) asparagine glycan. Residues P263–G283 are disordered. Residues V289–L309 traverse the membrane as a helical segment. Residues L310 to R683 are Cytoplasmic-facing. The region spanning F361–T641 is the Protein kinase domain. ATP-binding positions include L367–V375 and K389. Y434 bears the Phosphotyrosine mark. The Proton acceptor role is filled by D486. Phosphoserine is present on S490. T528 carries the post-translational modification Phosphothreonine. Y536 is subject to Phosphotyrosine.

It belongs to the protein kinase superfamily. Ser/Thr protein kinase family. CRK subfamily.

Its subcellular location is the membrane. It catalyses the reaction L-seryl-[protein] + ATP = O-phospho-L-seryl-[protein] + ADP + H(+). The catalysed reaction is L-threonyl-[protein] + ATP = O-phospho-L-threonyl-[protein] + ADP + H(+). This chain is Cysteine-rich receptor-like protein kinase 28 (CRK28), found in Arabidopsis thaliana (Mouse-ear cress).